Reading from the N-terminus, the 111-residue chain is Universal stress protein B (111 aa).

2 helical membrane passes run 1–21 and 90–110; these read MIST…NMAR and FILT…LMIW.

Belongs to the universal stress protein B family.

The protein localises to the cell inner membrane. The chain is Universal stress protein B from Escherichia coli O45:K1 (strain S88 / ExPEC).